We begin with the raw amino-acid sequence, 95 residues long: Aspartyl/glutamyl-tRNA(Asn/Gln) amidotransferase subunit C (95 aa).

Belongs to the GatC family. In terms of assembly, heterotrimer of A, B and C subunits.

The enzyme catalyses L-glutamyl-tRNA(Gln) + L-glutamine + ATP + H2O = L-glutaminyl-tRNA(Gln) + L-glutamate + ADP + phosphate + H(+). It carries out the reaction L-aspartyl-tRNA(Asn) + L-glutamine + ATP + H2O = L-asparaginyl-tRNA(Asn) + L-glutamate + ADP + phosphate + 2 H(+). In terms of biological role, allows the formation of correctly charged Asn-tRNA(Asn) or Gln-tRNA(Gln) through the transamidation of misacylated Asp-tRNA(Asn) or Glu-tRNA(Gln) in organisms which lack either or both of asparaginyl-tRNA or glutaminyl-tRNA synthetases. The reaction takes place in the presence of glutamine and ATP through an activated phospho-Asp-tRNA(Asn) or phospho-Glu-tRNA(Gln). The sequence is that of Aspartyl/glutamyl-tRNA(Asn/Gln) amidotransferase subunit C from Thermoanaerobacter pseudethanolicus (strain ATCC 33223 / 39E) (Clostridium thermohydrosulfuricum).